The following is a 284-amino-acid chain: Elongation factor Ts (284 aa).

The tract at residues 80–83 (TDFV) is involved in Mg(2+) ion dislocation from EF-Tu.

The protein belongs to the EF-Ts family.

The protein localises to the cytoplasm. Its function is as follows. Associates with the EF-Tu.GDP complex and induces the exchange of GDP to GTP. It remains bound to the aminoacyl-tRNA.EF-Tu.GTP complex up to the GTP hydrolysis stage on the ribosome. The sequence is that of Elongation factor Ts from Neisseria gonorrhoeae (strain ATCC 700825 / FA 1090).